The chain runs to 242 residues: Cysteine-rich venom protein VAR11 (242 aa).

The first 19 residues, 1–19 (MILLKLYLTLAAILCQSRG), serve as a signal peptide directing secretion. The region spanning 41 to 169 (NKHNDLRRTV…SLKYFQVCQY (129 aa)) is the SCP domain. Disulfide bonds link Cys-77/Cys-156, Cys-95/Cys-170, Cys-151/Cys-167, Cys-189/Cys-196, Cys-192/Cys-201, Cys-205/Cys-237, Cys-214/Cys-231, and Cys-223/Cys-235. In terms of domain architecture, ShKT spans 205-237 (CAYNDDYTSCPDLTKQVGCNHPVTANCKASCQC).

The protein belongs to the CRISP family. As to expression, expressed by the venom gland.

It localises to the secreted. Its function is as follows. Blocks ryanodine receptors, and potassium channels. The protein is Cysteine-rich venom protein VAR11 of Varanus varius (Lace monitor lizard).